We begin with the raw amino-acid sequence, 94 residues long: DNA-directed RNA polymerase subunit omega (94 aa).

The protein belongs to the RNA polymerase subunit omega family. The RNAP catalytic core consists of 2 alpha, 1 beta, 1 beta' and 1 omega subunit. When a sigma factor is associated with the core the holoenzyme is formed, which can initiate transcription.

It carries out the reaction RNA(n) + a ribonucleoside 5'-triphosphate = RNA(n+1) + diphosphate. Promotes RNA polymerase assembly. Latches the N- and C-terminal regions of the beta' subunit thereby facilitating its interaction with the beta and alpha subunits. The sequence is that of DNA-directed RNA polymerase subunit omega from Bifidobacterium longum (strain DJO10A).